A 106-amino-acid polypeptide reads, in one-letter code: Iron-sulfur cluster assembly protein CyaY (106 aa).

The protein belongs to the frataxin family.

In terms of biological role, involved in iron-sulfur (Fe-S) cluster assembly. May act as a regulator of Fe-S biogenesis. The sequence is that of Iron-sulfur cluster assembly protein CyaY from Colwellia psychrerythraea (strain 34H / ATCC BAA-681) (Vibrio psychroerythus).